A 498-amino-acid chain; its full sequence is Polyamine aminopropyltransferase (498 aa).

The next 6 membrane-spanning stretches (helical) occupy residues I7–A27, V35–L55, F67–L87, I97–L117, V134–A154, and G163–L183. Residues V196–K446 form a spermidine synthase region. The PABS domain occupies T200 to Q439. Residue Q234 coordinates S-methyl-5'-thioadenosine. The spermidine site is built by H264 and D288. Residues D308 and D342–A343 contribute to the S-methyl-5'-thioadenosine site. The active-site Proton acceptor is the D360.

The protein belongs to the spermidine/spermine synthase family. In terms of assembly, homodimer or homotetramer.

It localises to the cell membrane. The catalysed reaction is S-adenosyl 3-(methylsulfanyl)propylamine + putrescine = S-methyl-5'-thioadenosine + spermidine + H(+). It participates in amine and polyamine biosynthesis; spermidine biosynthesis; spermidine from putrescine: step 1/1. Functionally, catalyzes the irreversible transfer of a propylamine group from the amino donor S-adenosylmethioninamine (decarboxy-AdoMet) to putrescine (1,4-diaminobutane) to yield spermidine. This Leptospira interrogans serogroup Icterohaemorrhagiae serovar copenhageni (strain Fiocruz L1-130) protein is Polyamine aminopropyltransferase.